A 149-amino-acid chain; its full sequence is Transcriptional repressor NrdR (149 aa).

A zinc finger lies at 3 to 34 (CPFCNADDTKVIDSRLVADGHQVRRRRECLVC). The ATP-cone domain occupies 49-139 (PRVIKSNGVR…VYRSFEDIRE (91 aa)).

This sequence belongs to the NrdR family. The cofactor is Zn(2+).

In terms of biological role, negatively regulates transcription of bacterial ribonucleotide reductase nrd genes and operons by binding to NrdR-boxes. This Tolumonas auensis (strain DSM 9187 / NBRC 110442 / TA 4) protein is Transcriptional repressor NrdR.